A 127-amino-acid chain; its full sequence is Small ribosomal subunit protein uS11 (127 aa).

Belongs to the universal ribosomal protein uS11 family. Part of the 30S ribosomal subunit. Interacts with proteins S7 and S18. Binds to IF-3.

In terms of biological role, located on the platform of the 30S subunit, it bridges several disparate RNA helices of the 16S rRNA. Forms part of the Shine-Dalgarno cleft in the 70S ribosome. The chain is Small ribosomal subunit protein uS11 from Anaeromyxobacter sp. (strain Fw109-5).